Consider the following 418-residue polypeptide: UDP-N-acetylglucosamine 1-carboxyvinyltransferase (418 aa).

Position 22-23 (22-23 (KN)) interacts with phosphoenolpyruvate. Arg91 is a binding site for UDP-N-acetyl-alpha-D-glucosamine. Catalysis depends on Cys115, which acts as the Proton donor. Cys115 is modified (2-(S-cysteinyl)pyruvic acid O-phosphothioketal). UDP-N-acetyl-alpha-D-glucosamine contacts are provided by residues 120–124 (RPVDL), 160–163 (KVSV), Asp305, and Ile327.

Belongs to the EPSP synthase family. MurA subfamily.

Its subcellular location is the cytoplasm. The enzyme catalyses phosphoenolpyruvate + UDP-N-acetyl-alpha-D-glucosamine = UDP-N-acetyl-3-O-(1-carboxyvinyl)-alpha-D-glucosamine + phosphate. Its pathway is cell wall biogenesis; peptidoglycan biosynthesis. Functionally, cell wall formation. Adds enolpyruvyl to UDP-N-acetylglucosamine. This chain is UDP-N-acetylglucosamine 1-carboxyvinyltransferase, found in Baumannia cicadellinicola subsp. Homalodisca coagulata.